The sequence spans 573 residues: DNA ligase (573 aa).

Residue Glu250 coordinates ATP. Lys252 functions as the N6-AMP-lysine intermediate in the catalytic mechanism. Residues Arg257, Arg272, Glu301, Phe342, Arg432, and Lys438 each coordinate ATP.

Belongs to the ATP-dependent DNA ligase family. The cofactor is Mg(2+).

It catalyses the reaction ATP + (deoxyribonucleotide)n-3'-hydroxyl + 5'-phospho-(deoxyribonucleotide)m = (deoxyribonucleotide)n+m + AMP + diphosphate.. In terms of biological role, DNA ligase that seals nicks in double-stranded DNA during DNA replication, DNA recombination and DNA repair. The polypeptide is DNA ligase (Methanococcus maripaludis (strain DSM 14266 / JCM 13030 / NBRC 101832 / S2 / LL)).